The following is a 261-amino-acid chain: Cytochrome c oxidase subunit 3 (261 aa).

Residues 1–15 (MTHQTHAYHTVNPSP) are Mitochondrial matrix-facing. The chain crosses the membrane as a helical span at residues 16–34 (WPLTGALSALLMTSGLIMW). Over 35–40 (FHFNSP) the chain is Mitochondrial intermembrane. The chain crosses the membrane as a helical span at residues 41-66 (LLLVLGLTTNFLTMYQWWRDIIREST). Residues 67–72 (FQGHHT) are Mitochondrial matrix-facing. A helical transmembrane segment spans residues 73–105 (TIVQKGLRYGMILFIVSEVFFFAGFFWAFYHSS). At 106-128 (LAPTPELGGCWPPTGINPLNPLE) the chain is on the mitochondrial intermembrane side. A helical transmembrane segment spans residues 129–152 (VPLLNTSVLLASGVSITWAHHSLM). Over 153–155 (EGH) the chain is Mitochondrial matrix. The chain crosses the membrane as a helical span at residues 156–183 (RKHMLQALFITIALGVYFTLLQASEYYE). Residues 184–190 (APFTISD) are Mitochondrial intermembrane-facing. The helical transmembrane segment at 191-223 (GIYGSTFFVATGFHGLHVIIGSSFLIVCFMRQL) threads the bilayer. Residues 224–232 (KFHFTSSHH) are Mitochondrial matrix-facing. A helical membrane pass occupies residues 233-256 (FGFEAAAWYWHFVDVVWLFLYVSI). Residues 257–261 (YWWGS) are Mitochondrial intermembrane-facing.

This sequence belongs to the cytochrome c oxidase subunit 3 family. In terms of assembly, component of the cytochrome c oxidase (complex IV, CIV), a multisubunit enzyme composed of 14 subunits. The complex is composed of a catalytic core of 3 subunits MT-CO1, MT-CO2 and MT-CO3, encoded in the mitochondrial DNA, and 11 supernumerary subunits COX4I, COX5A, COX5B, COX6A, COX6B, COX6C, COX7A, COX7B, COX7C, COX8 and NDUFA4, which are encoded in the nuclear genome. The complex exists as a monomer or a dimer and forms supercomplexes (SCs) in the inner mitochondrial membrane with NADH-ubiquinone oxidoreductase (complex I, CI) and ubiquinol-cytochrome c oxidoreductase (cytochrome b-c1 complex, complex III, CIII), resulting in different assemblies (supercomplex SCI(1)III(2)IV(1) and megacomplex MCI(2)III(2)IV(2)).

The protein resides in the mitochondrion inner membrane. It catalyses the reaction 4 Fe(II)-[cytochrome c] + O2 + 8 H(+)(in) = 4 Fe(III)-[cytochrome c] + 2 H2O + 4 H(+)(out). In terms of biological role, component of the cytochrome c oxidase, the last enzyme in the mitochondrial electron transport chain which drives oxidative phosphorylation. The respiratory chain contains 3 multisubunit complexes succinate dehydrogenase (complex II, CII), ubiquinol-cytochrome c oxidoreductase (cytochrome b-c1 complex, complex III, CIII) and cytochrome c oxidase (complex IV, CIV), that cooperate to transfer electrons derived from NADH and succinate to molecular oxygen, creating an electrochemical gradient over the inner membrane that drives transmembrane transport and the ATP synthase. Cytochrome c oxidase is the component of the respiratory chain that catalyzes the reduction of oxygen to water. Electrons originating from reduced cytochrome c in the intermembrane space (IMS) are transferred via the dinuclear copper A center (CU(A)) of subunit 2 and heme A of subunit 1 to the active site in subunit 1, a binuclear center (BNC) formed by heme A3 and copper B (CU(B)). The BNC reduces molecular oxygen to 2 water molecules using 4 electrons from cytochrome c in the IMS and 4 protons from the mitochondrial matrix. This Dasypus novemcinctus (Nine-banded armadillo) protein is Cytochrome c oxidase subunit 3 (MT-CO3).